The sequence spans 727 residues: Ankyrin repeat domain-containing protein 6 (727 aa).

ANK repeat units follow at residues 9-38 (ALSE…RVAV), 41-70 (HGRT…DLDV), 74-103 (GDQT…ALDR), 107-136 (DGNT…NVLA), 140-169 (AGNT…RADL), 173-202 (AGDT…SVHE), 206-235 (AGDT…DTTI), and 239-268 (AGQT…VLRF). A disordered region spans residues 277 to 386 (KRERLKEERR…HRCSSPPPPH (110 aa)). A compositionally biased stretch (basic and acidic residues) spans 280–296 (RLKEERRAQSVPRDEVA). The span at 298-312 (SKGSVSAGDTPSSEQ) shows a compositional bias: polar residues. Residues 314–324 (VARKEEAREEF) are compositionally biased toward basic and acidic residues. A compositionally biased stretch (basic residues) spans 363-379 (KNLHAHNHPKKRNRHRC). Positions 417-446 (LINKLENQLEATVEEIKAELGSVQDKMNTK) form a coiled coil. Positions 548-557 (PAAASDSSPP) are enriched in low complexity. Disordered stretches follow at residues 548 to 586 (PAAA…CTGS) and 601 to 657 (NEAA…TGPH). The span at 566–584 (LNSTATQRLQQELSSSDCT) shows a compositional bias: polar residues. A compositionally biased stretch (basic residues) spans 622-633 (KSGKSGPTRHRA). A coiled-coil region spans residues 682-727 (WYERKIEEARSQANQKAQQDKATLKEHIKSLEEELAKLRTRVQKEN).

As to quaternary structure, interacts with AXN1, AXN2 and CSNK1E/CKI-epsilon.

Functionally, recruits CKI-epsilon to the beta-catenin degradation complex that consists of AXN1 or AXN2 and GSK3-beta and allows efficient phosphorylation of beta-catenin, thereby inhibiting beta-catenin/Tcf signals. In Homo sapiens (Human), this protein is Ankyrin repeat domain-containing protein 6 (ANKRD6).